A 500-amino-acid polypeptide reads, in one-letter code: Arabinofuranosidase/B-xylosidase (500 aa).

The signal sequence occupies residues 1–21 (MLSNARIIAAGCIAAGSLVAA). An N-linked (GlcNAc...) asparagine glycan is attached at Asn467.

This sequence belongs to the glycosyl hydrolase 54 family.

It carries out the reaction Hydrolysis of terminal non-reducing alpha-L-arabinofuranoside residues in alpha-L-arabinosides.. The enzyme catalyses Hydrolysis of (1-&gt;4)-beta-D-xylans, to remove successive D-xylose residues from the non-reducing termini.. The protein is Arabinofuranosidase/B-xylosidase (xyl1) of Trichoderma koningii (Hypocrea koningii).